Consider the following 209-residue polypeptide: Probable nicotinate-nucleotide adenylyltransferase (209 aa).

The protein belongs to the NadD family.

It carries out the reaction nicotinate beta-D-ribonucleotide + ATP + H(+) = deamido-NAD(+) + diphosphate. Its pathway is cofactor biosynthesis; NAD(+) biosynthesis; deamido-NAD(+) from nicotinate D-ribonucleotide: step 1/1. In terms of biological role, catalyzes the reversible adenylation of nicotinate mononucleotide (NaMN) to nicotinic acid adenine dinucleotide (NaAD). The polypeptide is Probable nicotinate-nucleotide adenylyltransferase (Hydrogenovibrio crunogenus (strain DSM 25203 / XCL-2) (Thiomicrospira crunogena)).